Reading from the N-terminus, the 294-residue chain is 4-hydroxy-tetrahydrodipicolinate synthase (294 aa).

Thr45 lines the pyruvate pocket. Tyr133 functions as the Proton donor/acceptor in the catalytic mechanism. The active-site Schiff-base intermediate with substrate is the Lys162. Ile204 is a pyruvate binding site.

The protein belongs to the DapA family. As to quaternary structure, homotetramer; dimer of dimers.

It localises to the cytoplasm. The enzyme catalyses L-aspartate 4-semialdehyde + pyruvate = (2S,4S)-4-hydroxy-2,3,4,5-tetrahydrodipicolinate + H2O + H(+). Its pathway is amino-acid biosynthesis; L-lysine biosynthesis via DAP pathway; (S)-tetrahydrodipicolinate from L-aspartate: step 3/4. Functionally, catalyzes the condensation of (S)-aspartate-beta-semialdehyde [(S)-ASA] and pyruvate to 4-hydroxy-tetrahydrodipicolinate (HTPA). In Bartonella quintana (strain Toulouse) (Rochalimaea quintana), this protein is 4-hydroxy-tetrahydrodipicolinate synthase.